We begin with the raw amino-acid sequence, 458 residues long: Plant UBX domain-containing protein 2 (458 aa).

Residues 1–103 are disordered; that stretch reads MDDVKDKLKG…APQDGFDPYG (103 aa). Residues 44–54 are compositionally biased toward polar residues; it reads PIQNRFNSSQA. A compositionally biased stretch (pro residues) spans 56–70; that stretch reads NPTPRPKPNPNPLPE. Residues 74–85 show a composition bias toward polar residues; that stretch reads SSSDQKISGSTR. A C2H2-type; atypical zinc finger spans residues 121-143; it reads FECPICKNPFTSEEEVSVHVESC. In terms of domain architecture, PUB spans 181 to 248; it reads SSIDVLLRLF…EIWAVMDVPS (68 aa). One can recognise a UBX domain in the interval 349–433; sequence KRYKRSMIRV…ELVPSALIRF (85 aa).

Interacts with CDC48A in vitro and co-fractionates with membrane-associated but not soluble CDC48A in vivo.

The protein localises to the membrane. Its function is as follows. Facilitates the interaction of SYP31 and CDC48A, thereby regulating an CDC48A membrane-associated function. Appears to act as a negative regulator mediating the powdery mildew-plant interaction. This Arabidopsis thaliana (Mouse-ear cress) protein is Plant UBX domain-containing protein 2.